Here is an 87-residue protein sequence, read N- to C-terminus: Small ribosomal subunit protein uS15c (87 aa).

It belongs to the universal ribosomal protein uS15 family. As to quaternary structure, part of the 30S ribosomal subunit.

The protein localises to the plastid. It is found in the chloroplast. The polypeptide is Small ribosomal subunit protein uS15c (rps15) (Oenothera glazioviana (Large-flowered evening primrose)).